We begin with the raw amino-acid sequence, 310 residues long: Tetrahydromethanopterin S-methyltransferase subunit H (310 aa).

It belongs to the MtrH family. As to quaternary structure, the complex is composed of 8 subunits; MtrA, MtrB, MtrC, MtrD, MtrE, MtrF, MtrG and MtrH.

It carries out the reaction 5-methyl-5,6,7,8-tetrahydromethanopterin + coenzyme M + 2 Na(+)(in) = 5,6,7,8-tetrahydromethanopterin + methyl-coenzyme M + 2 Na(+)(out). The protein operates within one-carbon metabolism; methanogenesis from CO(2); methyl-coenzyme M from 5,10-methylene-5,6,7,8-tetrahydromethanopterin: step 2/2. Part of a complex that catalyzes the formation of methyl-coenzyme M and tetrahydromethanopterin from coenzyme M and methyl-tetrahydromethanopterin. This is an energy-conserving, sodium-ion translocating step. MtrH catalyzes the transfer of the methyl group from methyl-tetrahydromethanopterin to the corrinoid prosthetic group of MtrA. The polypeptide is Tetrahydromethanopterin S-methyltransferase subunit H (Methanothermobacter thermautotrophicus (strain ATCC 29096 / DSM 1053 / JCM 10044 / NBRC 100330 / Delta H) (Methanobacterium thermoautotrophicum)).